The sequence spans 297 residues: Lysenin (297 aa).

The N-terminal cap domain stretch occupies residues 10 to 33; sequence EQIEVDVVAVWKEGYVYENRGSTS. Positions 34–107 are beta-hairpin domain; it reads VDQKITITKG…SKVIEHTITI (74 aa). The N-terminal cap domain stretch occupies residues 108 to 156; it reads PPTSKFTRWQLNADVGGADIEYMYLIDEVTPIGGTQSIPQVITSRAKII. The segment at 157 to 297 is C-terminal receptor-binding domain; it reads VGRQIILGKT…EDKWILEVVG (141 aa). The an N-(acyl)-sphingosylphosphocholine site is built by lysine 185, serine 227, tyrosine 233, and tyrosine 282. Residues cysteine 272 and cysteine 283 are joined by a disulfide bond.

It belongs to the lysenin family. Binds to sphingomyelin as a monomer by using its C-terminal domain. Forms a nonamer when sphingomyelin/lysenin ratio is lower than ca 500. Oligomerization, but not binding, is influenced by the fluidity of sphingomyelin. As to expression, expressed by coelomocytes.

It localises to the secreted. It is found in the target cell membrane. In terms of biological role, pore-forming toxin that defensively acts against parasitic microorganisms by forming pores in sphingomyelin-containing membranes. Has hemolytic activity and is also cytotoxic to spermatozoa of some species of invertebrates and many species of vertebrates and to amphibian larvae, guinea pig polymorphonuclear leukocytes, chicken fibroblasts, normal spleen cells and various tumor cells. Is lethal for various species of reptiles, amphibian, birds and mammals. Induces smooth muscle contraction. It binds sphingomyelin and induces hemolysis in the same manner as lysenin-related protein 2, and is 10-fold more effective than lysenin-related protein 1. This chain is Lysenin, found in Eisenia fetida (Red wiggler worm).